The following is a 228-amino-acid chain: Thymidine kinase (228 aa).

An ATP-binding site is contributed by 23–30; sequence GNIGCGKS. Glu-50 functions as the Proton acceptor in the catalytic mechanism. Residues Tyr-68, Gln-79, and Phe-109 each coordinate substrate. Arg-157 contacts ATP.

It belongs to the DCK/DGK family.

It carries out the reaction thymidine + ATP = dTMP + ADP + H(+). This is Thymidine kinase (TK) from Ictaluridae (bullhead catfishes).